The following is a 164-amino-acid chain: uncharacterized protein (164 aa).

Positions 1–18 (MILILTIIVGFLIYFVTA) are cleaved as a signal peptide. N-linked (GlcNAc...) asparagine; by host glycosylation occurs at asparagine 88.

Belongs to the IIV-6 357R family.

This is an uncharacterized protein from Acheta domesticus (House cricket).